The following is a 264-amino-acid chain: Hemin import ATP-binding protein HmuV (264 aa).

The ABC transporter domain maps to 10–246 (LQAQNLSYSI…HTLRKWYQAD (237 aa)). 42-49 (GPNGAGKS) serves as a coordination point for ATP.

This sequence belongs to the ABC transporter superfamily. Heme (hemin) importer (TC 3.A.1.14.5) family. As to quaternary structure, the complex is composed of two ATP-binding proteins (HmuV), two transmembrane proteins (HmuU) and a solute-binding protein (HmuT).

The protein localises to the cell inner membrane. Functionally, part of the ABC transporter complex HmuTUV involved in hemin import. Responsible for energy coupling to the transport system. The chain is Hemin import ATP-binding protein HmuV from Photorhabdus laumondii subsp. laumondii (strain DSM 15139 / CIP 105565 / TT01) (Photorhabdus luminescens subsp. laumondii).